Consider the following 168-residue polypeptide: Small ribosomal subunit protein bS6 (168 aa).

The tract at residues 103 to 168 is disordered; the sequence is RQAIAEEKEK…AAADKSDDNA (66 aa). A compositionally biased stretch (basic and acidic residues) spans 106–115; the sequence is IAEEKEKKAE. Residues 116-125 show a composition bias toward low complexity; it reads GQAAADAAPA.

Belongs to the bacterial ribosomal protein bS6 family.

In terms of biological role, binds together with bS18 to 16S ribosomal RNA. This is Small ribosomal subunit protein bS6 from Desulfosudis oleivorans (strain DSM 6200 / JCM 39069 / Hxd3) (Desulfococcus oleovorans).